Reading from the N-terminus, the 258-residue chain is Snake venom serine protease PA (258 aa).

A signal peptide spans 1-18; it reads MVLIRVLANLLILQLSYA. Positions 19–24 are excised as a propeptide; the sequence is QKSPEL. One can recognise a Peptidase S1 domain in the interval 25–249; the sequence is VVGGDECNIN…YNDWIKSIIA (225 aa). 6 disulfide bridges follow: Cys-31–Cys-163, Cys-50–Cys-66, Cys-98–Cys-256, Cys-142–Cys-210, Cys-174–Cys-189, and Cys-200–Cys-225. N-linked (GlcNAc...) asparagine glycosylation is present at Asn-44. Residues His-65 and Asp-110 each act as charge relay system in the active site. Ser-204 (charge relay system) is an active-site residue.

Belongs to the peptidase S1 family. Snake venom subfamily. In terms of assembly, monomer. As to expression, expressed by the venom gland.

The protein resides in the secreted. Its function is as follows. Snake venom serine protease that may act in the hemostasis system of the prey. The polypeptide is Snake venom serine protease PA (Trimeresurus stejnegeri (Chinese green tree viper)).